The chain runs to 473 residues: Poly(A) polymerase catalytic subunit (473 aa).

Catalysis depends on residues aspartate 193 and aspartate 195.

It belongs to the poxviridae poly(A) polymerase catalytic subunit family. Heterodimer of a large (catalytic) subunit and a small (regulatory) subunit.

It catalyses the reaction RNA(n) + ATP = RNA(n)-3'-adenine ribonucleotide + diphosphate. Functionally, polymerase that creates the 3'-poly(A) tail of mRNA's. In Crocodylus johnstoni (Australian freshwater crocodile), this protein is Poly(A) polymerase catalytic subunit (PAPL).